A 361-amino-acid polypeptide reads, in one-letter code: MEDSGNSSGSEASRSGSEERRPVRERLGSRPPERRPVRARLGAIRRRRGGRGGRAARQALRQRRRQQQQQQRQQQHQRRRQEADRPDGGPDAPPDRLSESARAAVSATHARVGATRVNELFASARHDLSRPVFNDGFRAAGSSPWAAVLEFGAEQFTPDGRRVTWETLMFHGADLHRLFEVRPHATEAARVLREMVLLNEGLTESLASADETLTWVKLILTKGLTLRTLDPIVATAGAVLQNLRLKLGPFLRCYLRDTPVDELVRRRRLRDVRCIVTYTLVMLARIARVVERGSSCVLPEDLGDSPVPLEEYVPGACLGGIMDALDSHKTGCDAPTCRLTCSYTLVPVYMHGKYFYCNHLF.

Residues 1–15 (MEDSGNSSGSEASRS) show a composition bias toward low complexity. The tract at residues 1-107 (MEDSGNSSGS…SESARAAVSA (107 aa)) is disordered. The span at 16–36 (GSEERRPVRERLGSRPPERRP) shows a compositional bias: basic and acidic residues. Residues 45–54 (RRRRGGRGGR) are RGG-box. The span at 80–99 (RQEADRPDGGPDAPPDRLSE) shows a compositional bias: basic and acidic residues. Positions 253, 328, 332, and 337 each coordinate Zn(2+). The CHC2-type zinc finger occupies 253–337 (CYLRDTPVDE…HKTGCDAPTC (85 aa)).

Belongs to the HHV-1 ICP27 protein family. As to quaternary structure, homodimer. Homodimerization is required for transactivation. Associates in a complex with RNA, and host export factors NXF1/TAP and ALYREF; these interactions allow nuclear export of viral transcripts. Interacts with three host shuttling SR proteins SRSF1, SRSF3 and SRSF7. Interacts with host SRPK1. Interacts with IE62; this interaction enhances IE62 transactivation.

The protein localises to the host cytoplasm. It is found in the host nucleus. Multifunctional regulator of the expression of viral genes that mediates nuclear export of viral intronless mRNAs. This immediate early (EI) protein promotes the nuclear export of viral intronless mRNAs by interacting with mRNAs and host NXF1/TAP. The polypeptide is mRNA export factor ICP27 homolog (Suid herpesvirus 1 (strain Kaplan) (SuHV-1)).